A 160-amino-acid chain; its full sequence is Secreted RxLR effector protein RXLR-C11 (160 aa).

The first 19 residues, 1–19, serve as a signal peptide directing secretion; that stretch reads MHFSLVLLVFAAIVIPICA. Positions 58 to 75 match the RxLR-dEER motif; the sequence is RLLRMNDKAVISDHEEER.

The protein belongs to the RxLR effector family.

Its subcellular location is the secreted. It localises to the host cell membrane. It is found in the host nucleus. In terms of biological role, secreted effector that suppresses pattern-triggered immunity (PTI) in plant host. The polypeptide is Secreted RxLR effector protein RXLR-C11 (Plasmopara halstedii (Downy mildew of sunflower)).